The chain runs to 1708 residues: Rapamycin-insensitive companion of mTOR (1708 aa).

Positions 1–789 (MAAIGRGRSL…DKANLHALIQ (789 aa)) are interaction with NBN. 3 positions are modified to phosphoserine: S21, S35, and S265. K274 participates in a covalent cross-link: Glycyl lysine isopeptide (Lys-Gly) (interchain with G-Cter in ubiquitin). Residues 521-570 (LKDTEEALLINLRDSQVLQHKENLEWNWNLIGTILKWPNVNLRNYKDEQL) are ribosome-binding domain. ATP-binding residues include N543, R572, and R576. The disordered stretch occupies residues 1022-1041 (LSLNSESTSSRHNSESESVP). N6-acetyllysine is present on residues K1092 and K1095. Phosphothreonine is present on T1103. The segment at 1103-1134 (TLPNKKHRSSSDPKGGKLSSESKTSNRRIRTL) is disordered. N6-acetyllysine is present on residues K1116, K1119, and K1125. Phosphothreonine; by RPS6KB1 is present on T1135. 3 positions are modified to phosphoserine: S1138, S1162, and S1219. The interval 1204 to 1252 (VVESSTSSHMKIRSQSFNTDTTTSGISSMSSSPSRETVGVDATTMDTDC) is disordered. Positions 1206 to 1221 (ESSTSSHMKIRSQSFN) are enriched in polar residues. The span at 1222 to 1240 (TDTTTSGISSMSSSPSRET) shows a compositional bias: low complexity. A Phosphoserine; by GSK3-beta modification is found at S1235. The residue at position 1271 (T1271) is a Phosphothreonine. A phosphoserine mark is found at S1274, S1278, S1282, and S1284. The span at 1275–1288 (NHLSLSKSNSVSLV) shows a compositional bias: low complexity. The segment at 1275-1298 (NHLSLSKSNSVSLVPPGSSHTLPR) is disordered. Position 1295 is a phosphothreonine (T1295). Phosphoserine occurs at positions 1302 and 1313. T1332 carries the phosphothreonine modification. Residues S1346 and S1353 each carry the phosphoserine modification. Residue T1376 is modified to Phosphothreonine. S1385 is subject to Phosphoserine. Phosphotyrosine is present on Y1386. 3 positions are modified to phosphoserine: S1388, S1396, and S1411. 3 residues coordinate Zn(2+): H1515, C1520, and C1523. Phosphoserine is present on residues S1571, S1574, S1577, and S1591. C1651 lines the Zn(2+) pocket. T1695 bears the Phosphothreonine; by GSK3-alpha and GSK3-beta mark.

It belongs to the RICTOR family. As to quaternary structure, component of the mechanistic target of rapamycin complex 2 (mTORC2), consisting in two heterotretramers composed of MTOR, MLST8, RICTOR and MAPKAP1/SIN1. The mTORC2 core complex associates with PRR5/PROTOR1 and/or PRR5L/PROTOR2. Contrary to mTORC1, mTORC2 does not bind to and is not sensitive to FKBP12-rapamycin. Binds directly to MTOR and PRR5 within the TORC2 complex; interaction with MTOR is enhanced by deubiquitination of RICTOR by USP9X. Interaction with MAPKAP1 is not enhanced by RICTOR deubiquitination by USP9X. Interacts with CCDC28B. Interacts with NBN. Interacts with SIK3. Interacts with NCKAP1L. Interacts with kinases GSK3A and GSK3B; the interactions lead to phosphorylation of RICTOR at Thr-1695 which facilitates its FBXW7-mediated ubiquitination and subsequent degradation. Interacts with FBXW7; the interaction is enhanced by GSK3-mediated phosphorylation of Thr-1695 and results in RICTOR ubiquitination and degradation. Interacts with ARMH4 (via cytoplasmic tail); this interaction bridges ARMH4 to the mTORC2 complex and inhibits the mTORC2 kinase activity. Interacts with UBXN2A. Interacts with TSPAN8. (Microbial infection) Interacts with vaccinia virus protein F17; this interaction dysregulates MTOR. In terms of processing, phosphorylated by MTOR; when part of mTORC2. Phosphorylated at Thr-1135 by RPS6KB1 downstream of the mTORC1 complex: phosphorylation of RICTOR inhibits mTORC2 signaling by creating a binding site for 14-3-3 proteins. Phosphorylated at Thr-1695 by GSK3A and GSK3B which facilitates RICTOR ubiquitination and subsequent degradation. Phosphorylated at Ser-1235 by GSK3B in response to endoplasmic stress, inhibiting mTORC2 signaling. Post-translationally, ubiquitinated by the SCF(FBXW7) complex, leading to its degradation by the proteasome. Deubiquitinated by USP9X; deubiquitination stabilizes RICTOR and enhances its binding to MTOR, thus promoting mTORC2 complex assembly. Acetylated by EP300/p300 in response to glucose, leading to activate the mTORC2 complex. Acetylation by BLOC1S1/GCN5L1 in response to hypotoxic stress protects RICTOR against ubiquitination and subsequent degradation by the proteasome.

Its subcellular location is the cell membrane. It localises to the endoplasmic reticulum membrane. The protein resides in the lysosome membrane. Component of the mechanistic target of rapamycin complex 2 (mTORC2), which transduces signals from growth factors to pathways involved in proliferation, cytoskeletal organization, lipogenesis and anabolic output. In response to growth factors, mTORC2 phosphorylates and activates AGC protein kinase family members, including AKT (AKT1, AKT2 and AKT3), PKC (PRKCA, PRKCB and PRKCE) and SGK1. In contrast to mTORC1, mTORC2 is nutrient-insensitive. Within the mTORC2 complex, RICTOR probably acts as a molecular adapter. RICTOR is responsible for the FKBP12-rapamycin-insensitivity of mTORC2. mTORC2 plays a critical role in AKT1 activation by mediating phosphorylation of different sites depending on the context, such as 'Thr-450', 'Ser-473', 'Ser-477' or 'Thr-479', facilitating the phosphorylation of the activation loop of AKT1 on 'Thr-308' by PDPK1/PDK1 which is a prerequisite for full activation. mTORC2 catalyzes the phosphorylation of SGK1 at 'Ser-422' and of PRKCA on 'Ser-657'. The mTORC2 complex also phosphorylates various proteins involved in insulin signaling, such as FBXW8 and IGF2BP1. mTORC2 acts upstream of Rho GTPases to regulate the actin cytoskeleton, probably by activating one or more Rho-type guanine nucleotide exchange factors. mTORC2 promotes the serum-induced formation of stress-fibers or F-actin. In Homo sapiens (Human), this protein is Rapamycin-insensitive companion of mTOR.